We begin with the raw amino-acid sequence, 389 residues long: Pyruvate dehydrogenase E1 component subunit alpha, somatic form, mitochondrial (389 aa).

The transit peptide at 1–28 (GKMLAAVSRVLSGVAQKPASRVLVASRT) directs the protein to the mitochondrion. Lys62 carries the N6-acetyllysine; alternate modification. Lys62 is modified (N6-succinyllysine; alternate). Pyruvate is bound by residues His91, Tyr117, Arg118, Ala156, Gly164, Val166, Asp195, Gly196, Ala197, Asn224, and Tyr226. Thiamine diphosphate-binding residues include Tyr117 and Arg118. Thiamine diphosphate is bound by residues Gly164, Val166, Asp195, Gly196, Ala197, and Asn224. Asp195 serves as a coordination point for Mg(2+). Mg(2+) is bound by residues Asn224 and Tyr226. A Phosphoserine; by PDK1 modification is found at Ser231. Lys243 is modified (N6-acetyllysine; alternate). Lys243 is modified (N6-succinyllysine; alternate). Lys276 is subject to N6-succinyllysine. His291 lines the thiamine diphosphate pocket. Phosphoserine; by PDK1, PDK2, PDK3 and PDK4 is present on Ser292. Position 294 is a phosphoserine (Ser294). Ser299 bears the Phosphoserine; by PDK1, PDK2, PDK3 and PDK4 mark. Tyr300 is modified (phosphotyrosine). Lys312 carries the N6-acetyllysine; alternate modification. Lys312 is modified (N6-succinyllysine; alternate). Lys320 and Lys335 each carry N6-acetyllysine. Lys384 carries the N6-succinyllysine modification.

Heterotetramer of two PDHA1 and two PDHB subunits. The heterotetramer interacts with DLAT, and is part of the multimeric pyruvate dehydrogenase complex that contains multiple copies of pyruvate dehydrogenase (E1), dihydrolipoamide acetyltransferase (DLAT, E2) and lipoamide dehydrogenase (DLD, E3). These subunits are bound to an inner core composed of about 48 DLAT and 12 PDHX molecules. The cofactor is thiamine diphosphate. It depends on Mg(2+) as a cofactor. In terms of processing, phosphorylation at Ser-231, Ser-292 and Ser-299 by PDK family kinases inactivates the enzyme; for this phosphorylation at a single site is sufficient. Phosphorylation at Ser-292 interferes with access to active site, and thereby inactivates the enzyme. Dephosphorylation at all three sites, i.e. at Ser-231, Ser-292 and Ser-299, is required for reactivation. Acetylation alters the phosphorylation pattern. Deacetylated by SIRT3.

It is found in the mitochondrion matrix. It carries out the reaction N(6)-[(R)-lipoyl]-L-lysyl-[protein] + pyruvate + H(+) = N(6)-[(R)-S(8)-acetyldihydrolipoyl]-L-lysyl-[protein] + CO2. Pyruvate dehydrogenase activity is inhibited by phosphorylation of PDHA1; it is reactivated by dephosphorylation. In terms of biological role, the pyruvate dehydrogenase complex catalyzes the overall conversion of pyruvate to acetyl-CoA and CO(2), and thereby links the glycolytic pathway to the tricarboxylic cycle. The chain is Pyruvate dehydrogenase E1 component subunit alpha, somatic form, mitochondrial (PDHA1) from Sus scrofa (Pig).